Consider the following 115-residue polypeptide: NADH-ubiquinone oxidoreductase chain 3 (115 aa).

A run of 3 helical transmembrane segments spans residues Ile4–Leu24, Phe55–Ile75, and Thr86–Trp106.

Belongs to the complex I subunit 3 family. In terms of assembly, core subunit of respiratory chain NADH dehydrogenase (Complex I) which is composed of 45 different subunits. Interacts with TMEM186. Interacts with TMEM242.

It is found in the mitochondrion inner membrane. It carries out the reaction a ubiquinone + NADH + 5 H(+)(in) = a ubiquinol + NAD(+) + 4 H(+)(out). Its function is as follows. Core subunit of the mitochondrial membrane respiratory chain NADH dehydrogenase (Complex I) which catalyzes electron transfer from NADH through the respiratory chain, using ubiquinone as an electron acceptor. Essential for the catalytic activity of complex I. This chain is NADH-ubiquinone oxidoreductase chain 3, found in Baiomys taylori (Northern pygmy mouse).